Reading from the N-terminus, the 137-residue chain is Large ribosomal subunit protein uL16 (137 aa).

The protein belongs to the universal ribosomal protein uL16 family. Part of the 50S ribosomal subunit.

In terms of biological role, binds 23S rRNA and is also seen to make contacts with the A and possibly P site tRNAs. In Streptococcus thermophilus (strain ATCC BAA-491 / LMD-9), this protein is Large ribosomal subunit protein uL16.